A 64-amino-acid polypeptide reads, in one-letter code: uncharacterized protein (64 aa).

This is an uncharacterized protein from Escherichia coli O157:H7.